A 189-amino-acid chain; its full sequence is Phosphoheptose isomerase (189 aa).

The region spanning 34–189 is the SIS domain; it reads AVETLKNGNK…CQIIDNELSH (156 aa). 49–51 contributes to the substrate binding site; the sequence is NGG. Zn(2+) is bound by residues His58 and Glu62. Substrate contacts are provided by residues Glu62, 91-92, 117-119, Ser122, and Gln169; these read ND and STS. Zn(2+)-binding residues include Gln169 and His177.

This sequence belongs to the SIS family. GmhA subfamily. In terms of assembly, homotetramer. Zn(2+) is required as a cofactor.

Its subcellular location is the cytoplasm. It catalyses the reaction 2 D-sedoheptulose 7-phosphate = D-glycero-alpha-D-manno-heptose 7-phosphate + D-glycero-beta-D-manno-heptose 7-phosphate. Its pathway is carbohydrate biosynthesis; D-glycero-D-manno-heptose 7-phosphate biosynthesis; D-glycero-alpha-D-manno-heptose 7-phosphate and D-glycero-beta-D-manno-heptose 7-phosphate from sedoheptulose 7-phosphate: step 1/1. Functionally, catalyzes the isomerization of sedoheptulose 7-phosphate in D-glycero-D-manno-heptose 7-phosphate. The sequence is that of Phosphoheptose isomerase from Aliarcobacter butzleri (strain RM4018) (Arcobacter butzleri).